The chain runs to 360 residues: Aminomethyltransferase (360 aa).

The protein belongs to the GcvT family. In terms of assembly, the glycine cleavage system is composed of four proteins: P, T, L and H.

It catalyses the reaction N(6)-[(R)-S(8)-aminomethyldihydrolipoyl]-L-lysyl-[protein] + (6S)-5,6,7,8-tetrahydrofolate = N(6)-[(R)-dihydrolipoyl]-L-lysyl-[protein] + (6R)-5,10-methylene-5,6,7,8-tetrahydrofolate + NH4(+). Functionally, the glycine cleavage system catalyzes the degradation of glycine. This chain is Aminomethyltransferase, found in Flavobacterium psychrophilum (strain ATCC 49511 / DSM 21280 / CIP 103535 / JIP02/86).